The following is a 239-amino-acid chain: Large ribosomal subunit protein bL25 (239 aa).

The tract at residues 217-239 is disordered; that stretch reads IKAEAHAAEGTQAEGSTEEGQQQ. Residues 229–239 show a composition bias toward polar residues; the sequence is AEGSTEEGQQQ.

This sequence belongs to the bacterial ribosomal protein bL25 family. CTC subfamily. Part of the 50S ribosomal subunit; part of the 5S rRNA/L5/L18/L25 subcomplex. Contacts the 5S rRNA. Binds to the 5S rRNA independently of L5 and L18.

Functionally, this is one of the proteins that binds to the 5S RNA in the ribosome where it forms part of the central protuberance. This is Large ribosomal subunit protein bL25 from Deinococcus deserti (strain DSM 17065 / CIP 109153 / LMG 22923 / VCD115).